The sequence spans 236 residues: MTSRLFALIPCAGTGSRSGSALPKQYRTLAGRALLHYTLAAFDACSEFAQTLVVISPDDAHFDARRFAGLRFAVRRCGGASRQASVMNGLIQLAEFGATDADWVLVHDAARPGITPALIRTLIGALKDDPVGGIVALPVADTLKRVPAGGDAIERTESRNGLWQAQTPQMFRIGMLRDAIRRAQLDGHDLTDEASAIEWAGHTPRVVQGSLRNFKVTYPEDFDLAEAILAQPARAS.

It belongs to the IspD/TarI cytidylyltransferase family. IspD subfamily.

The enzyme catalyses 2-C-methyl-D-erythritol 4-phosphate + CTP + H(+) = 4-CDP-2-C-methyl-D-erythritol + diphosphate. It functions in the pathway isoprenoid biosynthesis; isopentenyl diphosphate biosynthesis via DXP pathway; isopentenyl diphosphate from 1-deoxy-D-xylulose 5-phosphate: step 2/6. In terms of biological role, catalyzes the formation of 4-diphosphocytidyl-2-C-methyl-D-erythritol from CTP and 2-C-methyl-D-erythritol 4-phosphate (MEP). In Burkholderia pseudomallei (strain 1106a), this protein is 2-C-methyl-D-erythritol 4-phosphate cytidylyltransferase.